A 176-amino-acid polypeptide reads, in one-letter code: Small ribosomal subunit protein uS5 (176 aa).

The 64-residue stretch at 11–74 (LSEVLVDVNR…QAAKKKMMKV (64 aa)) folds into the S5 DRBM domain.

It belongs to the universal ribosomal protein uS5 family. Part of the 30S ribosomal subunit. Contacts proteins S4 and S8.

Functionally, with S4 and S12 plays an important role in translational accuracy. Located at the back of the 30S subunit body where it stabilizes the conformation of the head with respect to the body. This Rickettsia bellii (strain RML369-C) protein is Small ribosomal subunit protein uS5.